The primary structure comprises 215 residues: tRNA (guanine-N(7)-)-methyltransferase (215 aa).

S-adenosyl-L-methionine contacts are provided by E43, E68, D95, and D117. D117 is an active-site residue. Residues K121, D153, and 190 to 193 (TEYE) contribute to the substrate site.

The protein belongs to the class I-like SAM-binding methyltransferase superfamily. TrmB family.

It carries out the reaction guanosine(46) in tRNA + S-adenosyl-L-methionine = N(7)-methylguanosine(46) in tRNA + S-adenosyl-L-homocysteine. It participates in tRNA modification; N(7)-methylguanine-tRNA biosynthesis. Catalyzes the formation of N(7)-methylguanine at position 46 (m7G46) in tRNA. The chain is tRNA (guanine-N(7)-)-methyltransferase from Staphylococcus epidermidis (strain ATCC 35984 / DSM 28319 / BCRC 17069 / CCUG 31568 / BM 3577 / RP62A).